Here is an 879-residue protein sequence, read N- to C-terminus: Bifunctional uridylyltransferase/uridylyl-removing enzyme (879 aa).

A uridylyltransferase region spans residues 1–340 (MANVQEDKDF…GTQDLQHAEH (340 aa)). The tract at residues 341-700 (ISDDFAVANK…IGDENNYGTT (360 aa)) is uridylyl-removing. The HD domain maps to 458–580 (VDEHTFRLVR…VSTPERLDYL (123 aa)). 2 consecutive ACT domains span residues 701–782 (ELFI…STKR) and 809–879 (TFEL…DLEF).

Belongs to the GlnD family. Mg(2+) is required as a cofactor.

The catalysed reaction is [protein-PII]-L-tyrosine + UTP = [protein-PII]-uridylyl-L-tyrosine + diphosphate. The enzyme catalyses [protein-PII]-uridylyl-L-tyrosine + H2O = [protein-PII]-L-tyrosine + UMP + H(+). Uridylyltransferase (UTase) activity is inhibited by glutamine, while glutamine activates uridylyl-removing (UR) activity. Functionally, modifies, by uridylylation and deuridylylation, the PII regulatory proteins (GlnB and homologs), in response to the nitrogen status of the cell that GlnD senses through the glutamine level. Under low glutamine levels, catalyzes the conversion of the PII proteins and UTP to PII-UMP and PPi, while under higher glutamine levels, GlnD hydrolyzes PII-UMP to PII and UMP (deuridylylation). Thus, controls uridylylation state and activity of the PII proteins, and plays an important role in the regulation of nitrogen assimilation and metabolism. This chain is Bifunctional uridylyltransferase/uridylyl-removing enzyme, found in Idiomarina loihiensis (strain ATCC BAA-735 / DSM 15497 / L2-TR).